The chain runs to 440 residues: uncharacterized protein (440 aa).

10 helical membrane-spanning segments follow: residues 26 to 46 (NGLI…SSTF), 59 to 79 (FVFW…NGVL), 96 to 116 (FFLG…LKLK), 138 to 158 (LTLS…SIYL), 211 to 231 (FLVF…YLFA), 241 to 261 (LRKP…VGII), 263 to 283 (WIII…FVIF), 284 to 304 (WVIK…SLTI), 394 to 414 (FLII…SVFI), and 418 to 438 (IVQI…FTFI).

It to M.pneumoniae MPN_087.

The protein localises to the cell membrane. This is an uncharacterized protein from Mycoplasma pneumoniae (strain ATCC 29342 / M129 / Subtype 1) (Mycoplasmoides pneumoniae).